The chain runs to 200 residues: Recombination protein RecR (200 aa).

The C4-type zinc-finger motif lies at 58 to 73 (CQKCHNISDTTLCSIC). The 96-residue stretch at 81 to 176 (GLICVVENIQ…KLSNIARGVA (96 aa)) folds into the Toprim domain.

This sequence belongs to the RecR family.

May play a role in DNA repair. It seems to be involved in an RecBC-independent recombinational process of DNA repair. It may act with RecF and RecO. The protein is Recombination protein RecR of Amoebophilus asiaticus (strain 5a2).